Here is a 315-residue protein sequence, read N- to C-terminus: Neuroguidin (315 aa).

Ala-2 is modified (N-acetylalanine). Positions 7-41 (LESDVSSSITLLKNLQEQVMAVTAQIQALTTKVRA) form a coiled coil. The segment at 41 to 174 (AGTYSTEKGL…KGSAKKYVPP (134 aa)) is necessary for interaction with EIF4E. 3 positions are modified to phosphoserine: Ser-121, Ser-142, and Ser-143. The interval 123-190 (SENDPLRFKP…YDETEAEREQ (68 aa)) is disordered. A compositionally biased stretch (acidic residues) spans 144–155 (EDEEESEAEEGQ). Basic and acidic residues predominate over residues 180–190 (HYDETEAEREQ). Residues 181-203 (YDETEAEREQKRLEKAKRRALSS) adopt a coiled-coil conformation. Residues Ser-204 and Ser-214 each carry the phosphoserine modification. Composition is skewed to basic and acidic residues over residues 212–225 (QYSD…DARH) and 232–241 (SQEDQHRVNY). Disordered regions lie at residues 212 to 243 (QYSD…NYEE) and 284 to 315 (GTAH…RRRW). Over residues 295–315 (VKKRKKLPKKGRKKKGFRRRW) the composition is skewed to basic residues.

Belongs to the SAS10 family. Interacts with CPEB1 and EIF4E. As to expression, expressed in testis, ovary, spleen, kidney, hippocampus and cerebellum (at protein level). Expressed in testis, ovary, spleen, kidney, brain.

Its subcellular location is the nucleus. It is found in the nucleolus. It localises to the chromosome. The protein resides in the centromere. The protein localises to the cytoplasm. Its subcellular location is the cell projection. It is found in the axon. It localises to the dendrite. The protein resides in the filopodium. Functionally, part of the small subunit (SSU) processome, first precursor of the small eukaryotic ribosomal subunit. During the assembly of the SSU processome in the nucleolus, many ribosome biogenesis factors, an RNA chaperone and ribosomal proteins associate with the nascent pre-rRNA and work in concert to generate RNA folding, modifications, rearrangements and cleavage as well as targeted degradation of pre-ribosomal RNA by the RNA exosome. Its dissociation from the complex determines the transition from state pre-A1 to state pre-A1*. Inhibits mRNA translation in a cytoplasmic polyadenylation element (CPE)-dependent manner. The polypeptide is Neuroguidin (Ngdn) (Mus musculus (Mouse)).